Reading from the N-terminus, the 254-residue chain is Small ribosomal subunit protein uS2 (254 aa).

The protein belongs to the universal ribosomal protein uS2 family.

This is Small ribosomal subunit protein uS2 from Legionella pneumophila (strain Lens).